The sequence spans 476 residues: Aspartyl/glutamyl-tRNA(Asn/Gln) amidotransferase subunit B (476 aa).

It belongs to the GatB/GatE family. GatB subfamily. As to quaternary structure, heterotrimer of A, B and C subunits.

The catalysed reaction is L-glutamyl-tRNA(Gln) + L-glutamine + ATP + H2O = L-glutaminyl-tRNA(Gln) + L-glutamate + ADP + phosphate + H(+). The enzyme catalyses L-aspartyl-tRNA(Asn) + L-glutamine + ATP + H2O = L-asparaginyl-tRNA(Asn) + L-glutamate + ADP + phosphate + 2 H(+). Functionally, allows the formation of correctly charged Asn-tRNA(Asn) or Gln-tRNA(Gln) through the transamidation of misacylated Asp-tRNA(Asn) or Glu-tRNA(Gln) in organisms which lack either or both of asparaginyl-tRNA or glutaminyl-tRNA synthetases. The reaction takes place in the presence of glutamine and ATP through an activated phospho-Asp-tRNA(Asn) or phospho-Glu-tRNA(Gln). The polypeptide is Aspartyl/glutamyl-tRNA(Asn/Gln) amidotransferase subunit B (Bacillus pumilus (strain SAFR-032)).